A 415-amino-acid chain; its full sequence is Tyrosine--tRNA ligase (415 aa).

Tyr34 is a binding site for L-tyrosine. The short motif at 39 to 48 (PTADSLHLGH) is the 'HIGH' region element. Residues Tyr164 and Gln168 each coordinate L-tyrosine. A 'KMSKS' region motif is present at residues 226-230 (KFGKS). Lys229 provides a ligand contact to ATP. In terms of domain architecture, S4 RNA-binding spans 348–415 (KNIVDFLVDG…KKKYFLGKIK (68 aa)).

This sequence belongs to the class-I aminoacyl-tRNA synthetase family. TyrS type 1 subfamily. Homodimer.

It localises to the cytoplasm. It carries out the reaction tRNA(Tyr) + L-tyrosine + ATP = L-tyrosyl-tRNA(Tyr) + AMP + diphosphate + H(+). Its function is as follows. Catalyzes the attachment of tyrosine to tRNA(Tyr) in a two-step reaction: tyrosine is first activated by ATP to form Tyr-AMP and then transferred to the acceptor end of tRNA(Tyr). In Leuconostoc citreum (strain KM20), this protein is Tyrosine--tRNA ligase.